The primary structure comprises 226 residues: MRASREGKHISGGERLVSEEKIEEAVLELLRKALTHENGKPDFINIKIEKIDKVNYIKALPIKTITCKNKKEAREVAKKILLEEGIPEEVVEKAFKIIDKGGMRGAAILNLNGERLEPDRERGVRVKNIDTSERLKEKILKEGLGTERTVDAIAIASKVIRLGIIAELCTSDNKSYTTGYVATKKGYFRITNLKNINEPGGRVFFVKDIDEELIKRLEEEAYIIDL.

This sequence belongs to the BioW family. Homodimer. It depends on Mg(2+) as a cofactor.

The catalysed reaction is heptanedioate + ATP + CoA = 6-carboxyhexanoyl-CoA + AMP + diphosphate. Its pathway is metabolic intermediate metabolism; pimeloyl-CoA biosynthesis; pimeloyl-CoA from pimelate: step 1/1. In terms of biological role, catalyzes the transformation of pimelate into pimeloyl-CoA with concomitant hydrolysis of ATP to AMP. This chain is 6-carboxyhexanoate--CoA ligase, found in Methanocaldococcus infernus (strain DSM 11812 / JCM 15783 / ME).